A 513-amino-acid chain; its full sequence is ATP synthase subunit alpha (513 aa).

Gly-169–Thr-176 is an ATP binding site.

This sequence belongs to the ATPase alpha/beta chains family. F-type ATPases have 2 components, CF(1) - the catalytic core - and CF(0) - the membrane proton channel. CF(1) has five subunits: alpha(3), beta(3), gamma(1), delta(1), epsilon(1). CF(0) has three main subunits: a(1), b(2) and c(9-12). The alpha and beta chains form an alternating ring which encloses part of the gamma chain. CF(1) is attached to CF(0) by a central stalk formed by the gamma and epsilon chains, while a peripheral stalk is formed by the delta and b chains.

Its subcellular location is the cell inner membrane. It catalyses the reaction ATP + H2O + 4 H(+)(in) = ADP + phosphate + 5 H(+)(out). In terms of biological role, produces ATP from ADP in the presence of a proton gradient across the membrane. The alpha chain is a regulatory subunit. This Francisella tularensis subsp. tularensis (strain SCHU S4 / Schu 4) protein is ATP synthase subunit alpha.